The primary structure comprises 169 residues: Lipoprotein signal peptidase (169 aa).

4 helical membrane passes run 4-24, 29-49, 70-90, and 101-121; these read PICSTGLRWLWLAVVVVILDI, WVMAHFALYESVPLIPFFNLT, WFFAGIAIGISVVLMVMMYRS, and YALIIGGALGNLYDRLVHGAV. Residues aspartate 123 and aspartate 141 contribute to the active site. Residues 137 to 157 traverse the membrane as a helical segment; it reads FNLADVAISIGAVLVIFEGFL.

This sequence belongs to the peptidase A8 family.

It is found in the cell inner membrane. It catalyses the reaction Release of signal peptides from bacterial membrane prolipoproteins. Hydrolyzes -Xaa-Yaa-Zaa-|-(S,diacylglyceryl)Cys-, in which Xaa is hydrophobic (preferably Leu), and Yaa (Ala or Ser) and Zaa (Gly or Ala) have small, neutral side chains.. Its pathway is protein modification; lipoprotein biosynthesis (signal peptide cleavage). Its function is as follows. This protein specifically catalyzes the removal of signal peptides from prolipoproteins. The protein is Lipoprotein signal peptidase of Yersinia pseudotuberculosis serotype O:1b (strain IP 31758).